Consider the following 1073-residue polypeptide: Probable inorganic carbon transporter subunit DabA (1073 aa).

The Zn(2+) site is built by cysteine 551, aspartate 553, histidine 742, and cysteine 757.

The protein belongs to the inorganic carbon transporter (TC 9.A.2) DabA family. In terms of assembly, forms a complex with DabB. It depends on Zn(2+) as a cofactor.

The protein resides in the cell inner membrane. Functionally, part of an energy-coupled inorganic carbon pump. This is Probable inorganic carbon transporter subunit DabA from Methylococcus capsulatus (strain ATCC 33009 / NCIMB 11132 / Bath).